An 84-amino-acid polypeptide reads, in one-letter code: Small ribosomal subunit protein bS20 (84 aa).

The protein belongs to the bacterial ribosomal protein bS20 family.

In terms of biological role, binds directly to 16S ribosomal RNA. The polypeptide is Small ribosomal subunit protein bS20 (Bacteroides fragilis (strain ATCC 25285 / DSM 2151 / CCUG 4856 / JCM 11019 / LMG 10263 / NCTC 9343 / Onslow / VPI 2553 / EN-2)).